A 206-amino-acid polypeptide reads, in one-letter code: Large ribosomal subunit protein uL4 (206 aa).

Belongs to the universal ribosomal protein uL4 family. In terms of assembly, part of the 50S ribosomal subunit.

Functionally, one of the primary rRNA binding proteins, this protein initially binds near the 5'-end of the 23S rRNA. It is important during the early stages of 50S assembly. It makes multiple contacts with different domains of the 23S rRNA in the assembled 50S subunit and ribosome. Its function is as follows. Forms part of the polypeptide exit tunnel. The sequence is that of Large ribosomal subunit protein uL4 from Jannaschia sp. (strain CCS1).